The primary structure comprises 496 residues: Ribose import ATP-binding protein RbsA (496 aa).

2 consecutive ABC transporter domains span residues 5–241 (LQMK…VGRE) and 252–496 (SPGE…VGGE). 37-44 (GENGAGKS) contacts ATP.

It belongs to the ABC transporter superfamily. Ribose importer (TC 3.A.1.2.1) family. The complex is composed of an ATP-binding protein (RbsA), two transmembrane proteins (RbsC) and a solute-binding protein (RbsB).

The protein resides in the cell membrane. It catalyses the reaction D-ribose(out) + ATP + H2O = D-ribose(in) + ADP + phosphate + H(+). Its function is as follows. Part of the ABC transporter complex RbsABC involved in ribose import. Responsible for energy coupling to the transport system. This is Ribose import ATP-binding protein RbsA from Caldanaerobacter subterraneus subsp. tengcongensis (strain DSM 15242 / JCM 11007 / NBRC 100824 / MB4) (Thermoanaerobacter tengcongensis).